The chain runs to 246 residues: Ly6/PLAUR domain-containing protein 4 (246 aa).

An N-terminal signal peptide occupies residues 1-26 (MGPQHLRLVQLFCLLGAISTLPRAGA). An N-linked (GlcNAc...) asparagine glycan is attached at Asn117. Residues 142–223 (CPTCVGEHMK…LNILEKSQIV (82 aa)) enclose the UPAR/Ly6 domain. Ala225 carries the GPI-anchor amidated alanine lipid modification. The propeptide at 226-246 (ASSRQDPAWGVVLGLLFAFRD) is removed in mature form.

The protein localises to the cell membrane. In Homo sapiens (Human), this protein is Ly6/PLAUR domain-containing protein 4 (LYPD4).